Consider the following 199-residue polypeptide: MLDRETSRDDVAVQTIHVMQGAYVASDDPNIVYTTILGSCVCTCMCDPIARVGGINHFLLPYAGVTKVENLRYGYHAIEILINSLLKLGANRHRLEAKLFGGGSMTLQLGAVGPANAVFAQKYLRDESINCVARSLGGTRARKIRFHPTSGRVQQMFLTEIEQLPPESPRVRLRRGAGEVTYFDCDANSDPAAFGKEMR.

Belongs to the CheD family.

It catalyses the reaction L-glutaminyl-[protein] + H2O = L-glutamyl-[protein] + NH4(+). Its function is as follows. Probably deamidates glutamine residues to glutamate on methyl-accepting chemotaxis receptors (MCPs), playing an important role in chemotaxis. The polypeptide is Probable chemoreceptor glutamine deamidase CheD (Cereibacter sphaeroides (strain ATCC 17025 / ATH 2.4.3) (Rhodobacter sphaeroides)).